Here is a 281-residue protein sequence, read N- to C-terminus: Pantothenate synthetase (281 aa).

Residue 30 to 37 (MGYLHEGH) participates in ATP binding. Residue histidine 37 is the Proton donor of the active site. Position 61 (glutamine 61) interacts with (R)-pantoate. Glutamine 61 contacts beta-alanine. 147-150 (GQKD) lines the ATP pocket. Glutamine 153 is a binding site for (R)-pantoate. ATP contacts are provided by residues valine 176 and 184–187 (MSSR).

Belongs to the pantothenate synthetase family. Homodimer.

It is found in the cytoplasm. The catalysed reaction is (R)-pantoate + beta-alanine + ATP = (R)-pantothenate + AMP + diphosphate + H(+). The protein operates within cofactor biosynthesis; (R)-pantothenate biosynthesis; (R)-pantothenate from (R)-pantoate and beta-alanine: step 1/1. Catalyzes the condensation of pantoate with beta-alanine in an ATP-dependent reaction via a pantoyl-adenylate intermediate. In Caldicellulosiruptor saccharolyticus (strain ATCC 43494 / DSM 8903 / Tp8T 6331), this protein is Pantothenate synthetase.